A 710-amino-acid polypeptide reads, in one-letter code: Solute carrier organic anion transporter family member 3A1 (710 aa).

Met-1 is subject to N-acetylmethionine. The segment covering 1–15 (MQGKKPGGSSGGGRS) has biased composition (gly residues). Positions 1 to 25 (MQGKKPGGSSGGGRSGELQGDEAQR) are disordered. Residues 1-40 (MQGKKPGGSSGGGRSGELQGDEAQRNKKKKKKVSCFSNIK) are Cytoplasmic-facing. A helical transmembrane segment spans residues 41 to 60 (IFLVSECALMLAQGTVGAYL). At 61 to 79 (VSVLTTLERRFNLQSADVG) the chain is on the extracellular side. A helical transmembrane segment spans residues 80 to 100 (VIASSFEIGNLALILFVSYFG). Over 101-106 (ARGHRP) the chain is Cytoplasmic. Residues 107–131 (RLIGCGGIVMALGALLSALPEFLTH) form a helical membrane-spanning segment. Residues 132–174 (QYKYEAGEIRWGAEGRDVCATNGSSSDEGPDPDLICRNRTATN) are Extracellular-facing. Residues Asn-153 and Asn-169 are each glycosylated (N-linked (GlcNAc...) asparagine). Residues 175–203 (MMYLLLIGAQVLLGIGATPVQPLGVSYID) form a helical membrane-spanning segment. Residues 204-222 (DHVRRKDSSLYIGILFTML) are Cytoplasmic-facing. The chain crosses the membrane as a helical span at residues 223–243 (VFGPACGFILGSFCTKIYVDA). Topologically, residues 244-261 (VFIDTSNLDITPDDPRWI) are extracellular. The helical transmembrane segment at 262–286 (GAWWGGFLLCGALLFFSSLLMFGFP) threads the bilayer. Topologically, residues 287-344 (QSLPPHSEPGMESEQAMLPEREYERPKPSNGVLRHPLEPDSSASCFQQLRVIPKVTKH) are cytoplasmic. Residues 345–366 (LLSNPVFTCIVLAACMEIAVVA) traverse the membrane as a helical segment. Topologically, residues 367-386 (GFAAFLGKYLEQQFNLTTSS) are extracellular. The N-linked (GlcNAc...) asparagine glycan is linked to Asn-381. Residues 387 to 410 (ANQLLGMTAIPCACLGIFLGGLLV) traverse the membrane as a helical segment. Over 411-414 (KKLS) the chain is Cytoplasmic. A helical transmembrane segment spans residues 415–438 (LSALGAIRMAMLVNLVSTACYVSF). At 439–539 (LFLGCDTVPV…PGCQEAFLTF (101 aa)) the chain is on the extracellular side. An N-linked (GlcNAc...) asparagine glycan is attached at Asn-457. In terms of domain architecture, Kazal-like spans 465 to 513 (LDPYSPCNNNCECQTDSFTPVCGADGITYLSACFAGCNSTNLTGCACLT). Cystine bridges form between Cys-471/Cys-501, Cys-477/Cys-497, and Cys-486/Cys-511. N-linked (GlcNAc...) asparagine glycans are attached at residues Asn-502, Asn-505, and Asn-519. Residues 540-562 (LCVMCVCSLIGAMAQTPSVIILI) form a helical membrane-spanning segment. Topologically, residues 563–571 (RTVSPELKS) are cytoplasmic. A helical transmembrane segment spans residues 572–597 (YALGVLFLLLRLLGFIPPPLIFGAGI). Residues 598–630 (DSTCLFWSTFCGEQGACVLYDNVVYRYLYVSIA) are Extracellular-facing. The helical transmembrane segment at 631–648 (IALKSFAFILYTTTWQCL) threads the bilayer. At 649–705 (RKNYKRYIKNHEGGLSTSEFLASTLTLDNLGRDPVPAHQTHRTKFIYNLEDHEWCEN) the chain is on the cytoplasmic side.

This sequence belongs to the organo anion transporter (TC 2.A.60) family. In terms of tissue distribution, expressed in many brain regions, including frontal cortex, brain stem and cerebellum. Associated with neuronal bodies in a punctated matter. Detected at the arcuate nucleus and the choroid plexus (at protein level). Little expression, if any, in oligodendrocytes. In the cardiovascular system, detected in cardiac muscle cells and endothelial cells of aorta, coronary artery and left ventricular endocardium (at protein level). In the respiratory system, detected in alveolar epithelial cells and in mucosal epithelium of the trachea (at protein level). In the reproductive system, detected in spermatozoa, oocytes, smooth muscle cells of the ovary, epithelium of the glandula uterine, smooth muscle cells of the myometrium and epithelium of the endometrium (at protein level). In the kidney, detected in afferent and efferent arterioles, and the epithelium of distal tubules and collecting tubules (at protein level).

It is found in the basolateral cell membrane. The protein localises to the apical cell membrane. Its subcellular location is the basal cell membrane. It catalyses the reaction L-thyroxine(out) = L-thyroxine(in). It carries out the reaction prostaglandin E1(out) = prostaglandin E1(in). The catalysed reaction is prostaglandin E2(out) = prostaglandin E2(in). The enzyme catalyses prostaglandin F2alpha(out) = prostaglandin F2alpha(in). It catalyses the reaction (5Z,8Z,11Z,14Z)-eicosatetraenoate(out) = (5Z,8Z,11Z,14Z)-eicosatetraenoate(in). It carries out the reaction taurocholate(out) = taurocholate(in). The catalysed reaction is glycocholate(out) = glycocholate(in). The enzyme catalyses estrone 3-sulfate(out) = estrone 3-sulfate(in). It catalyses the reaction argipressin(out) = argipressin(in). Its function is as follows. Putative organic anion antiporter with apparent broad substrate specificity. Recognizes various substrates including thyroid hormone L-thyroxine, prostanoids such as prostaglandin E1 and E2, bile acids such as taurocholate, glycolate and glycochenodeoxycholate and peptide hormones such as L-arginine vasopressin, likely operating in a tissue-specific manner. The transport mechanism, its electrogenicity and potential tissue-specific counterions remain to be elucidated. The sequence is that of Solute carrier organic anion transporter family member 3A1 (Slco3a1) from Rattus norvegicus (Rat).